The sequence spans 310 residues: 5-oxoprolinase subunit C (310 aa).

It belongs to the PxpC family. In terms of assembly, forms a complex composed of PxpA, PxpB and PxpC.

The enzyme catalyses 5-oxo-L-proline + ATP + 2 H2O = L-glutamate + ADP + phosphate + H(+). Functionally, catalyzes the cleavage of 5-oxoproline to form L-glutamate coupled to the hydrolysis of ATP to ADP and inorganic phosphate. This Escherichia coli (strain K12) protein is 5-oxoprolinase subunit C.